Consider the following 354-residue polypeptide: Protein sex-lethal (354 aa).

The tract at residues 1-21 is disordered; it reads MYGNNNPGSNNNNGGYPPYGY. RRM domains follow at residues 125–203 and 211–291; these read TNLI…YARP and TNLY…LAEE.

As to quaternary structure, part of a complex containing fl(2)d, Sxl and vir. Part of a complex composed of at least mei-P26, bam, bgcn and Sxl; this complex is involved in translational repression of nanos mRNA. interacts with mei-p26. Interacts with nito. Interacts with Unr; cooperates with Unr to prevent translation of msl-2 transcripts. Interacts with how; promoting nuclear retention of msl-2 transcripts. Expressed in somatic tissues, but not in the pole cells, which are the precursors of the germline. Expressed in the anterior of the germarium.

The protein localises to the nucleus. It is found in the cytoplasm. In terms of biological role, sex determination switch protein, which controls sexual development and dosage compensation in females. Sxl protein is only active in females: it is inactive in males throughout development. Acts as a mRNA-binding protein, which specifically binds to a subset of pre-mRNAs and mRNAs and regulates their processing and/or translation. Binds nanos mRNA and is involved in bam-bgcn mediated repression of nanos mRNA translation. Promotes sexual development by controlling the female-specific alternative splicing of the transformer (tra) pre-mRNA: binds tightly to a characteristic uridine-rich polypyrimidine tract at the non-sex specific 3' splice site in one of the tra introns, preventing the general splicing factor U2AF from binding to this site and forcing it to bind to the female-specific 3' splice site. Acts as an inhibitor of dosage compensation in females by preventing production of msl-2 protein, an essential component of the MSL complex, the complex that mediates X-chromosome dosage compensation. Specifically binds to uridine stretches in both the 5'- and 3'-UTR of msl-2 transcripts. Sxl first acts at the splicing level by promoting retention of an intron in the 5' UTR of msl-2 pre-mRNA. The retained intron contains Sxl-binding sites that are required for subsequent steps of repression: after msl-2 mRNA export into the cytoplasm, Sxl coordinates its translational repression by targeting early steps of translation initiation. Together with how, Sxl also prevents production of msl-2 protein by preventing nuclear export of msl-2 transcripts. Embryo-specific product, which is expressed early only in female embryos and specifies female-adult specific splicing. The sequence is that of Protein sex-lethal from Drosophila melanogaster (Fruit fly).